The sequence spans 315 residues: Methionyl-tRNA formyltransferase (315 aa).

Residue 113 to 116 participates in (6S)-5,6,7,8-tetrahydrofolate binding; that stretch reads SLLP.

The protein belongs to the Fmt family.

The enzyme catalyses L-methionyl-tRNA(fMet) + (6R)-10-formyltetrahydrofolate = N-formyl-L-methionyl-tRNA(fMet) + (6S)-5,6,7,8-tetrahydrofolate + H(+). Attaches a formyl group to the free amino group of methionyl-tRNA(fMet). The formyl group appears to play a dual role in the initiator identity of N-formylmethionyl-tRNA by promoting its recognition by IF2 and preventing the misappropriation of this tRNA by the elongation apparatus. This is Methionyl-tRNA formyltransferase from Escherichia coli O139:H28 (strain E24377A / ETEC).